Here is a 292-residue protein sequence, read N- to C-terminus: Tetratricopeptide repeat protein 1 (292 aa).

Residues 23-125 (TQEAECAGPP…STRLKEEGNE (103 aa)) are disordered. 2 stretches are compositionally biased toward basic and acidic residues: residues 45-55 (LLRDDEAHLQE) and 75-85 (GADKVENKSNE). Residues S83 and S90 each carry the phosphoserine modification. Positions 99-125 (ELEKNMSDEEKQKRREESTRLKEEGNE) are enriched in basic and acidic residues. 3 TPR repeats span residues 116–149 (STRL…CPSC), 155–188 (SILF…NPSY), and 189–222 (IRAI…DPSI).

Interacts with the GAP domain of NF1. Interacts (via TPR repeats) with HSP90AA1 and HSPA8.

The polypeptide is Tetratricopeptide repeat protein 1 (TTC1) (Homo sapiens (Human)).